The following is a 186-amino-acid chain: MDMESILLDAEERMEKAIAALEREFSRLRTGRASASLVDGIKVDYYGTPTPISQVASVAVPDSRCITIQPWDRNAFSLIEKAILKSDLGLNPVNDGKIIRINIPPLTEERRKDLGKMARKYAEEAKVAVRNVRRDANEQLKKLEKNKELSEDDLRKAQEDVQKLTDRFVAKTDEKAGAKEKEIMDI.

The protein belongs to the RRF family.

The protein localises to the cytoplasm. Its function is as follows. Responsible for the release of ribosomes from messenger RNA at the termination of protein biosynthesis. May increase the efficiency of translation by recycling ribosomes from one round of translation to another. In Nitratidesulfovibrio vulgaris (strain DP4) (Desulfovibrio vulgaris), this protein is Ribosome-recycling factor.